The following is a 221-amino-acid chain: Stromal cell-derived factor 2-like protein 1 (221 aa).

An N-terminal signal peptide occupies residues 1-28 (MWSAGRGGAAWPVLLGLLLALLVPGGGA). MIR domains follow at residues 33 to 87 (AELV…IRGG), 95 to 150 (GSPV…VRCS), and 151 to 205 (GQHW…AMEG). Phosphoserine is present on Ser-215. The Prevents secretion from ER signature appears at 218 to 221 (HDEL).

In terms of assembly, part of a large chaperone multiprotein complex comprising CABP1, DNAJB11, HSP90B1, HSPA5, HYOU, PDIA2, PDIA4, PPIB, SDF2L1, UGGT1 and very small amounts of ERP29, but not, or at very low levels, CALR nor CANX. In terms of tissue distribution, ubiquitously expressed with high expression in testis, moderate expression in the pancreas, spleen, prostate, small intestine and colon. Very low expression is seen in brain and skeletal muscle.

It is found in the endoplasmic reticulum lumen. The polypeptide is Stromal cell-derived factor 2-like protein 1 (SDF2L1) (Homo sapiens (Human)).